The primary structure comprises 346 residues: fMet-Leu-Phe receptor (346 aa).

Residues Asn-1 and Asn-7 are each glycosylated (N-linked (GlcNAc...) asparagine). The Extracellular segment spans residues 1 to 24 (NSSLPTNISGGTPAVSAGYLFLDI). A helical transmembrane segment spans residues 25 to 47 (ITYLVFAVTFVLGVLGNGLVIWV). At 48-58 (AGFRMTHTVTT) the chain is on the cytoplasmic side. Residues 59–80 (ISYLNLAVADFCFTSTLPFFMV) traverse the membrane as a helical segment. Over 81 to 97 (RKAMGGHWPFGWFLCKF) the chain is Extracellular. Cys-95 and Cys-173 are joined by a disulfide. The helical transmembrane segment at 98 to 118 (IFTIVDINLFGSVFLIALIAL) threads the bilayer. Residues 119–137 (DRCVCVLHPVWTQNHRTVS) are Cytoplasmic-facing. A helical membrane pass occupies residues 138 to 159 (LAKKVIIGPWVMALLLTLPVII). The Extracellular portion of the chain corresponds to 160-202 (RVTTVPGKTGTVACTFNFSPWTNDPKERINVAIAMLTVRGIIR). A helical membrane pass occupies residues 203 to 223 (FIIGFSAPMSIVAVSYGLIAT). Over 224–239 (KIHKQGLIKFSRPLRV) the chain is Cytoplasmic. Residues 240–263 (LSFVAAAFFLCWSPYQVVALIATV) traverse the membrane as a helical segment. At 264–282 (RIRELLQGMYKEIGIAVDV) the chain is on the extracellular side. Residues 283–302 (TSALAFFNSCLNPMLYVFMG) form a helical membrane-spanning segment. Over 303–346 (QDFRERLIHALPASLERALTEDSTQTSDTATNSTLPSAEVALQA) the chain is Cytoplasmic. The disordered stretch occupies residues 322–346 (TEDSTQTSDTATNSTLPSAEVALQA). A compositionally biased stretch (polar residues) spans 323-338 (EDSTQTSDTATNSTLP).

It belongs to the G-protein coupled receptor 1 family. Post-translationally, phosphorylated; which is necessary for desensitization.

Its subcellular location is the cell membrane. In terms of biological role, high affinity receptor for N-formyl-methionyl peptides (fMLP), which are powerful neutrophil chemotactic factors. Binding of fMLP to the receptor stimulates intracellular calcium mobilization and superoxide anion release. This response is mediated via a G-protein that activates a phosphatidylinositol-calcium second messenger system. Receptor for TAFA4, mediates its effects on chemoattracting macrophages, promoting phagocytosis and increasing ROS release. Receptor for cathepsin CTSG, leading to increased phagocyte chemotaxis. This Pan troglodytes (Chimpanzee) protein is fMet-Leu-Phe receptor (FPR1).